Here is a 478-residue protein sequence, read N- to C-terminus: Glycogen synthase (478 aa).

Position 16 (K16) interacts with ADP-alpha-D-glucose.

Belongs to the glycosyltransferase 1 family. Bacterial/plant glycogen synthase subfamily.

The enzyme catalyses [(1-&gt;4)-alpha-D-glucosyl](n) + ADP-alpha-D-glucose = [(1-&gt;4)-alpha-D-glucosyl](n+1) + ADP + H(+). The protein operates within glycan biosynthesis; glycogen biosynthesis. Its function is as follows. Synthesizes alpha-1,4-glucan chains using ADP-glucose. This chain is Glycogen synthase, found in Lachnoclostridium phytofermentans (strain ATCC 700394 / DSM 18823 / ISDg) (Clostridium phytofermentans).